The chain runs to 446 residues: Zinc finger protein 19 (446 aa).

One can recognise a KRAB domain in the interval Val2 to Thr73. C2H2-type zinc fingers lie at residues Phe149 to His171, Phe177 to His199, Tyr205 to His227, Tyr233 to His255, Tyr261 to His283, Tyr289 to His311, Tyr317 to His339, Phe345 to His367, and Tyr373 to His395. The C2H2-type 10; degenerate zinc finger occupies Tyr401 to His423.

This sequence belongs to the krueppel C2H2-type zinc-finger protein family.

The protein localises to the nucleus. Functionally, may be involved in transcriptional regulation. The sequence is that of Zinc finger protein 19 (ZNF19) from Pongo abelii (Sumatran orangutan).